A 285-amino-acid polypeptide reads, in one-letter code: Polyamine aminopropyltransferase (285 aa).

The PABS domain occupies 5–241; sequence DTWFTEHFQA…GWWSVTLSSK (237 aa). Position 35 (Q35) interacts with S-methyl-5'-thioadenosine. Spermidine is bound by residues H66 and D90. S-methyl-5'-thioadenosine-binding positions include D110 and 141-142; that span reads DG. D160 acts as the Proton acceptor in catalysis. Position 160 to 163 (160 to 163) interacts with spermidine; sequence DSTD. P167 contacts S-methyl-5'-thioadenosine.

The protein belongs to the spermidine/spermine synthase family. Homodimer or homotetramer.

Its subcellular location is the cytoplasm. The catalysed reaction is S-adenosyl 3-(methylsulfanyl)propylamine + putrescine = S-methyl-5'-thioadenosine + spermidine + H(+). It participates in amine and polyamine biosynthesis; spermidine biosynthesis; spermidine from putrescine: step 1/1. Catalyzes the irreversible transfer of a propylamine group from the amino donor S-adenosylmethioninamine (decarboxy-AdoMet) to putrescine (1,4-diaminobutane) to yield spermidine. The chain is Polyamine aminopropyltransferase from Xylella fastidiosa (strain M12).